A 237-amino-acid chain; its full sequence is Eukaryotic translation initiation factor 3 subunit J (237 aa).

Residues 20–64 (ANNINKWEGEDDDEDVKESWEDEEEKKDEEKPTKTEAPAKTKPNK) are disordered. Residues 28–46 (GEDDDEDVKESWEDEEEKK) show a composition bias toward acidic residues. The span at 47–58 (DEEKPTKTEAPA) shows a compositional bias: basic and acidic residues. Residues 63–115 (NKVLKAKLLEQECLEKEEEAKRLANMSTEEKLAEKLRLQKIQEESDLKSALET) adopt a coiled-coil conformation.

This sequence belongs to the eIF-3 subunit J family. As to quaternary structure, component of the eukaryotic translation initiation factor 3 (eIF-3) complex. The eIF-3 complex interacts with pix.

The protein resides in the cytoplasm. Functionally, component of the eukaryotic translation initiation factor 3 (eIF-3) complex, which is involved in protein synthesis of a specialized repertoire of mRNAs and, together with other initiation factors, stimulates binding of mRNA and methionyl-tRNAi to the 40S ribosome. The eIF-3 complex specifically targets and initiates translation of a subset of mRNAs involved in cell proliferation. The sequence is that of Eukaryotic translation initiation factor 3 subunit J from Drosophila grimshawi (Hawaiian fruit fly).